A 309-amino-acid chain; its full sequence is Transaldolase (309 aa).

K125 (schiff-base intermediate with substrate) is an active-site residue.

It belongs to the transaldolase family. Type 1 subfamily. As to quaternary structure, homodimer.

The protein localises to the cytoplasm. The catalysed reaction is D-sedoheptulose 7-phosphate + D-glyceraldehyde 3-phosphate = D-erythrose 4-phosphate + beta-D-fructose 6-phosphate. Its pathway is carbohydrate degradation; pentose phosphate pathway; D-glyceraldehyde 3-phosphate and beta-D-fructose 6-phosphate from D-ribose 5-phosphate and D-xylulose 5-phosphate (non-oxidative stage): step 2/3. Transaldolase is important for the balance of metabolites in the pentose-phosphate pathway. The polypeptide is Transaldolase (Pseudomonas syringae pv. tomato (strain ATCC BAA-871 / DC3000)).